The chain runs to 387 residues: MKQAVIVDCIRTPMGRSKAGVFRNMRAESLSAELMKALLVRNPQLDPNTIEDVIWGCVQQTLEQGFNIARNAALLAGIPKQAGAVTVNRLCGSSMEAIHQAARAIMTGMGDTFIVGGVEHMGHVPMNHGVDFHPGLATNVAKASGMMGLTAEMLGKMHGITRQQQDEFAVRSHQRAHAATVEGRFANEIHAIEGHDANGALIKVMHDEVIRPETSLESLATLRPVFDPANGTVTAGTSSALSDGASAMLVMEEEKAKALGLPIRARIRSMAVAGCDAAIMGYGPVPATQKALQRAGLTMNDIDLIELNEAFAAQSLPCVKDLGLMDLVDEKVNLNGGAIALGHPLGCSGARISTTLINLMESKDATLGLATMCIGLGQGIATVFERA.

The active-site Acyl-thioester intermediate is cysteine 91. Catalysis depends on proton acceptor residues histidine 343 and cysteine 373.

The protein belongs to the thiolase-like superfamily. Thiolase family. In terms of assembly, heterotetramer of two alpha chains (FadB) and two beta chains (FadA).

It is found in the cytoplasm. The enzyme catalyses an acyl-CoA + acetyl-CoA = a 3-oxoacyl-CoA + CoA. The protein operates within lipid metabolism; fatty acid beta-oxidation. Catalyzes the final step of fatty acid oxidation in which acetyl-CoA is released and the CoA ester of a fatty acid two carbons shorter is formed. The sequence is that of 3-ketoacyl-CoA thiolase from Shewanella loihica (strain ATCC BAA-1088 / PV-4).